The sequence spans 366 residues: Class I histocompatibility antigen, Gogo-C*0203 alpha chain (366 aa).

The signal sequence occupies residues 1-24; sequence MRVMAPRTLILLLSGALALTETWA. An alpha-1 region spans residues 25-114; sequence GSHSMRYFYT…LRGYYNQSED (90 aa). Topologically, residues 25-308 are extracellular; the sequence is GSHSMRYFYT…EPSSQPTIPI (284 aa). N-linked (GlcNAc...) asparagine glycosylation is present at Asn-110. The segment at 115–206 is alpha-2; it reads GSHTLQSMYG…ENGKETLQRA (92 aa). Intrachain disulfides connect Cys-125–Cys-188 and Cys-227–Cys-283. The alpha-3 stretch occupies residues 207-298; it reads EPPKTHVTHH…GLPEPLTLRW (92 aa). The Ig-like C1-type domain occupies 209 to 297; that stretch reads PKTHVTHHPL…EGLPEPLTLR (89 aa). Residues 299-308 are connecting peptide; that stretch reads EPSSQPTIPI. Residues 309-332 traverse the membrane as a helical segment; sequence VGIVVGLAVLVVLAVLGAVVTAMM. Residues 333–366 are Cytoplasmic-facing; sequence CRRKSSGGKGGSCSQAACSNSAQGSDESLITCKA.

Belongs to the MHC class I family. Heterodimer of an alpha chain and a beta chain (beta-2-microglobulin).

The protein resides in the membrane. Its function is as follows. Involved in the presentation of foreign antigens to the immune system. This Gorilla gorilla gorilla (Western lowland gorilla) protein is Class I histocompatibility antigen, Gogo-C*0203 alpha chain.